A 171-amino-acid polypeptide reads, in one-letter code: 3-hydroxydecanoyl-[acyl-carrier-protein] dehydratase (171 aa).

His70 is a catalytic residue.

It belongs to the thioester dehydratase family. FabA subfamily. Homodimer.

Its subcellular location is the cytoplasm. The catalysed reaction is a (3R)-hydroxyacyl-[ACP] = a (2E)-enoyl-[ACP] + H2O. It carries out the reaction (3R)-hydroxydecanoyl-[ACP] = (2E)-decenoyl-[ACP] + H2O. The enzyme catalyses (2E)-decenoyl-[ACP] = (3Z)-decenoyl-[ACP]. The protein operates within lipid metabolism; fatty acid biosynthesis. Functionally, necessary for the introduction of cis unsaturation into fatty acids. Catalyzes the dehydration of (3R)-3-hydroxydecanoyl-ACP to E-(2)-decenoyl-ACP and then its isomerization to Z-(3)-decenoyl-ACP. Can catalyze the dehydratase reaction for beta-hydroxyacyl-ACPs with saturated chain lengths up to 16:0, being most active on intermediate chain length. The polypeptide is 3-hydroxydecanoyl-[acyl-carrier-protein] dehydratase (Pseudoalteromonas translucida (strain TAC 125)).